The sequence spans 305 residues: Probable alpha-L-glutamate ligase (305 aa).

Residues 119–301 enclose the ATP-grasp domain; the sequence is LQVLAAQHIP…IAGLIIDYLL (183 aa). ATP-binding positions include K155, 192 to 193, D201, and 225 to 227; these read DF and RAN. D262, E274, and N276 together coordinate Mg(2+). D262, E274, and N276 together coordinate Mn(2+).

The protein belongs to the RimK family. Requires Mg(2+) as cofactor. It depends on Mn(2+) as a cofactor.

This Haemophilus ducreyi (strain 35000HP / ATCC 700724) protein is Probable alpha-L-glutamate ligase.